The primary structure comprises 205 residues: MSSPLPMTALVLAGYLSGSLLGAVWVCRALGRRDPRHAGSRNPGFSNVLRLHGVVPAALTLGVDAAKAMPVLWVAQREALPIWAQGAVGLSVLVGHSYPLWHRGRGGKAVASAFGVLLMIATPVAWVCALCWALLAWRSRTAAVASLAAALLAPLASYWLAREATLVVSVFSALVLVRHAWNIRRLGQGGEPGLKREERIKPPEE.

Transmembrane regions (helical) follow at residues 7–27 (MTAL…VWVC), 54–74 (VVPA…VLWV), 80–100 (LPIW…SYPL), 116–136 (VLLM…ALLA), 141–161 (TAAV…YWLA), and 163–183 (EATL…AWNI).

Belongs to the PlsY family. Probably interacts with PlsX.

It localises to the cell inner membrane. It catalyses the reaction an acyl phosphate + sn-glycerol 3-phosphate = a 1-acyl-sn-glycero-3-phosphate + phosphate. The protein operates within lipid metabolism; phospholipid metabolism. In terms of biological role, catalyzes the transfer of an acyl group from acyl-phosphate (acyl-PO(4)) to glycerol-3-phosphate (G3P) to form lysophosphatidic acid (LPA). This enzyme utilizes acyl-phosphate as fatty acyl donor, but not acyl-CoA or acyl-ACP. The sequence is that of Glycerol-3-phosphate acyltransferase from Chromohalobacter salexigens (strain ATCC BAA-138 / DSM 3043 / CIP 106854 / NCIMB 13768 / 1H11).